Consider the following 151-residue polypeptide: MKGLKKKRRIQIIALAFVALAGSTALIGYAMRDGINFFRSPTQVVEAPPPETEVFRIGGLVEKGSLVRGQGETVTFRVTDTNATVPVSFTGVLPDLFAEDAGMVGTGRLVGGVFEASEILAKHDETYMPKEVVDALKEQGVFQHTEDQPQG.

Topologically, residues 1-9 are cytoplasmic; the sequence is MKGLKKKRR. Residues 10-30 traverse the membrane as a helical; Signal-anchor for type II membrane protein segment; it reads IQIIALAFVALAGSTALIGYA. Topologically, residues 31–151 are periplasmic; the sequence is MRDGINFFRS…FQHTEDQPQG (121 aa). Heme contacts are provided by histidine 123 and tyrosine 127.

The protein belongs to the CcmE/CycJ family.

The protein resides in the cell inner membrane. Functionally, heme chaperone required for the biogenesis of c-type cytochromes. Transiently binds heme delivered by CcmC and transfers the heme to apo-cytochromes in a process facilitated by CcmF and CcmH. The protein is Cytochrome c-type biogenesis protein CcmE of Cereibacter sphaeroides (strain ATCC 17029 / ATH 2.4.9) (Rhodobacter sphaeroides).